Consider the following 126-residue polypeptide: MQRIMLRGKLHQARVTHAVLNYEGSCGIDQDFLDAAGIVEYEAIDIYNIENGERFSTYAISGERGSRMISLNGAAARKAAVGDRIIICAYGPMTEDEVAQHKPRLVYLDAQNNIVRTSKDIPLQLA.

S25 acts as the Schiff-base intermediate with substrate; via pyruvic acid in catalysis. A Pyruvic acid (Ser) modification is found at S25. T57 is a binding site for substrate. The Proton donor role is filled by Y58. Residue 73–75 coordinates substrate; that stretch reads GAA.

The protein belongs to the PanD family. As to quaternary structure, heterooctamer of four alpha and four beta subunits. Requires pyruvate as cofactor. Post-translationally, is synthesized initially as an inactive proenzyme, which is activated by self-cleavage at a specific serine bond to produce a beta-subunit with a hydroxyl group at its C-terminus and an alpha-subunit with a pyruvoyl group at its N-terminus.

It is found in the cytoplasm. It catalyses the reaction L-aspartate + H(+) = beta-alanine + CO2. It functions in the pathway cofactor biosynthesis; (R)-pantothenate biosynthesis; beta-alanine from L-aspartate: step 1/1. In terms of biological role, catalyzes the pyruvoyl-dependent decarboxylation of aspartate to produce beta-alanine. The chain is Aspartate 1-decarboxylase from Tolumonas auensis (strain DSM 9187 / NBRC 110442 / TA 4).